We begin with the raw amino-acid sequence, 161 residues long: Large ribosomal subunit protein uL10 (161 aa).

Belongs to the universal ribosomal protein uL10 family. As to quaternary structure, part of the ribosomal stalk of the 50S ribosomal subunit. The N-terminus interacts with L11 and the large rRNA to form the base of the stalk. The C-terminus forms an elongated spine to which L12 dimers bind in a sequential fashion forming a multimeric L10(L12)X complex.

Functionally, forms part of the ribosomal stalk, playing a central role in the interaction of the ribosome with GTP-bound translation factors. The sequence is that of Large ribosomal subunit protein uL10 from Campylobacter curvus (strain 525.92).